Consider the following 98-residue polypeptide: Large ribosomal subunit protein uL23 (98 aa).

Belongs to the universal ribosomal protein uL23 family. As to quaternary structure, part of the 50S ribosomal subunit. Contacts protein L29, and trigger factor when it is bound to the ribosome.

Its function is as follows. One of the early assembly proteins it binds 23S rRNA. One of the proteins that surrounds the polypeptide exit tunnel on the outside of the ribosome. Forms the main docking site for trigger factor binding to the ribosome. This is Large ribosomal subunit protein uL23 from Streptococcus equi subsp. equi (strain 4047).